We begin with the raw amino-acid sequence, 156 residues long: Snaclec A11 (156 aa).

The signal sequence occupies residues 1-23; that stretch reads MGRSISVSFGLLVVFLSLSGTGA. Disulfide bonds link Cys27/Cys38, Cys55/Cys154, and Cys129/Cys146. A C-type lectin domain is found at 34 to 155; that stretch reads YDQHCYQAVD…CGQPYRFTCE (122 aa).

This sequence belongs to the snaclec family. Heterodimer; disulfide-linked. In terms of tissue distribution, expressed by the venom gland.

The protein localises to the secreted. In terms of biological role, interferes with one step of hemostasis (modulation of platelet aggregation, or coagulation cascade, for example). The chain is Snaclec A11 from Macrovipera lebetinus (Levantine viper).